We begin with the raw amino-acid sequence, 589 residues long: Phenylalanine--tRNA ligase beta subunit (589 aa).

A B5 domain is found at 302–377 (LEVREERISV…IAYGYNNIKK (76 aa)). 4 residues coordinate Mg(2+): Asp-355, Asp-361, Glu-364, and Asp-365.

This sequence belongs to the phenylalanyl-tRNA synthetase beta subunit family. Type 2 subfamily. Tetramer of two alpha and two beta subunits. Requires Mg(2+) as cofactor.

It is found in the cytoplasm. The catalysed reaction is tRNA(Phe) + L-phenylalanine + ATP = L-phenylalanyl-tRNA(Phe) + AMP + diphosphate + H(+). The polypeptide is Phenylalanine--tRNA ligase beta subunit (Drosophila melanogaster (Fruit fly)).